The primary structure comprises 337 residues: 5-formaminoimidazole-4-carboxamide-1-(beta)-D-ribofuranosyl 5'-monophosphate synthetase (337 aa).

2 residues coordinate 5-amino-1-(5-phospho-beta-D-ribosyl)imidazole-4-carboxamide: histidine 23 and serine 87. The ATP-grasp domain maps to 121–328 (MRLLEYAGIP…IAHEIVNAVK (208 aa)). ATP-binding positions include 144–191 (PVIV…VPAY) and glutamate 213. Asparagine 233 contacts 5-amino-1-(5-phospho-beta-D-ribosyl)imidazole-4-carboxamide. Residues glutamate 272 and glutamate 285 each coordinate Mg(2+).

Belongs to the phosphohexose mutase family. Mg(2+) is required as a cofactor. The cofactor is Mn(2+).

The catalysed reaction is 5-amino-1-(5-phospho-beta-D-ribosyl)imidazole-4-carboxamide + formate + ATP = 5-formamido-1-(5-phospho-D-ribosyl)imidazole-4-carboxamide + ADP + phosphate. It participates in purine metabolism; IMP biosynthesis via de novo pathway; 5-formamido-1-(5-phospho-D-ribosyl)imidazole-4-carboxamide from 5-amino-1-(5-phospho-D-ribosyl)imidazole-4-carboxamide (formate route): step 1/1. In terms of biological role, catalyzes the ATP- and formate-dependent formylation of 5-aminoimidazole-4-carboxamide-1-beta-d-ribofuranosyl 5'-monophosphate (AICAR) to 5-formaminoimidazole-4-carboxamide-1-beta-d-ribofuranosyl 5'-monophosphate (FAICAR) in the absence of folates. This is 5-formaminoimidazole-4-carboxamide-1-(beta)-D-ribofuranosyl 5'-monophosphate synthetase from Caldivirga maquilingensis (strain ATCC 700844 / DSM 13496 / JCM 10307 / IC-167).